Consider the following 735-residue polypeptide: Photosystem I P700 chlorophyll a apoprotein A2 (735 aa).

8 consecutive transmembrane segments (helical) span residues 46 to 69 (IFAS…FHVA), 135 to 158 (LYTG…LHLQ), 175 to 199 (LNHH…HVAI), 274 to 292 (IAHH…GHMY), 331 to 354 (IHFQ…QHMY), 370 to 396 (AALY…IFFI), 418 to 440 (AIIS…PYVH), and 518 to 536 (FLVH…LILV). Residues Cys-560 and Cys-569 each coordinate [4Fe-4S] cluster. 2 helical membrane passes run 576–597 (AFYL…YWHW) and 644–666 (LSVW…MFLI). The chlorophyll a site is built by His-655, Met-663, and Tyr-671. Trp-672 lines the phylloquinone pocket. A helical transmembrane segment spans residues 708–728 (LVGLAHFSVGYIFTYAAFLIA).

This sequence belongs to the PsaA/PsaB family. As to quaternary structure, the PsaA/B heterodimer binds the P700 chlorophyll special pair and subsequent electron acceptors. PSI consists of a core antenna complex that captures photons, and an electron transfer chain that converts photonic excitation into a charge separation. The eukaryotic PSI reaction center is composed of at least 11 subunits. Requires P700 is a chlorophyll a/chlorophyll a' dimer, A0 is one or more chlorophyll a, A1 is one or both phylloquinones and FX is a shared 4Fe-4S iron-sulfur center. as cofactor.

It localises to the plastid. It is found in the chloroplast thylakoid membrane. It carries out the reaction reduced [plastocyanin] + hnu + oxidized [2Fe-2S]-[ferredoxin] = oxidized [plastocyanin] + reduced [2Fe-2S]-[ferredoxin]. In terms of biological role, psaA and PsaB bind P700, the primary electron donor of photosystem I (PSI), as well as the electron acceptors A0, A1 and FX. PSI is a plastocyanin-ferredoxin oxidoreductase, converting photonic excitation into a charge separation, which transfers an electron from the donor P700 chlorophyll pair to the spectroscopically characterized acceptors A0, A1, FX, FA and FB in turn. Oxidized P700 is reduced on the lumenal side of the thylakoid membrane by plastocyanin. The sequence is that of Photosystem I P700 chlorophyll a apoprotein A2 from Zea mays (Maize).